We begin with the raw amino-acid sequence, 870 residues long: Lysosomal cholesterol signaling protein (870 aa).

Residues 1–38 lie on the Lumenal side of the membrane; sequence MNSNLPAENLTIAVNMTKTLPTAVTHGFNSTNDPPSMS. A PIN-like transporter region spans residues 1–370; that stretch reads MNSNLPAENL…SAWLLTFPTM (370 aa). 3 N-linked (GlcNAc...) asparagine glycosylation sites follow: asparagine 9, asparagine 15, and asparagine 29. A helical transmembrane segment spans residues 39 to 59; it reads ITRLFPALLECFGIVLCGYIA. Cholesterol-binding residues include phenylalanine 43 and tyrosine 57. The Cytoplasmic portion of the chain corresponds to 60–79; it reads GRANVITSTQAKGLGNFVSR. Residues 80–100 traverse the membrane as a helical segment; it reads FALPALLFKNMVVLNFSNVDW. Residues 101–104 are Lumenal-facing; it reads SFLY. A helical transmembrane segment spans residues 105–125; the sequence is SILIAKASVFFIVCVLTLLVA. Topologically, residues 126-133 are cytoplasmic; sequence SPDSRFSK. The discontinuously helical transmembrane segment at 134–154 threads the bilayer; the sequence is AGLFPIFATQSNDFALGYPIV. Residues 155-167 lie on the Lumenal side of the membrane; it reads EALYQTTYPEYLQ. The chain crosses the membrane as a helical span at residues 168–188; it reads YIYLVAPISLMMLNPIGFIFC. Residues 189 to 213 lie on the Cytoplasmic side of the membrane; sequence EIQKWKDTQNASQNKIKIVGLGLLR. The discontinuously helical transmembrane segment at 214-234 threads the bilayer; sequence VLQNPIVFMVFIGIAFNFILD. The Lumenal segment spans residues 235 to 243; that stretch reads RKVPVYVEN. Residues 244 to 264 form a discontinuously helical membrane-spanning segment; it reads FLDGLGNSFSGSALFYLGLTM. Topologically, residues 265–273 are cytoplasmic; sequence VGKIKRLKK. Cholesterol-binding residues include glycine 266, lysine 267, and isoleucine 268. Residues 274 to 294 traverse the membrane as a helical segment; the sequence is SAFVVLILLITAKLLVLPLLC. The Lumenal segment spans residues 295–315; it reads REMVELLDKGDSVVNHTSLSN. An N-linked (GlcNAc...) asparagine glycan is attached at asparagine 309. The chain crosses the membrane as a discontinuously helical span at residues 316 to 336; sequence YAFLYGVFPVAPGVAIFATQF. At 337 to 346 the chain is on the cytoplasmic side; that stretch reads NMEVEIITSG. A helical transmembrane segment spans residues 347–367; it reads MVISTFVSAPIMYVSAWLLTF. The Lumenal portion of the chain corresponds to 368-381; that stretch reads PTMDPKPLAYAIQN. Residues 380 to 717 are GPCR; the sequence is QNVSFDISIV…FGIFGLDKHL (338 aa). N-linked (GlcNAc...) asparagine glycosylation occurs at asparagine 381. Residues 382–402 form a helical membrane-spanning segment; that stretch reads VSFDISIVSLISLIWSLAILL. The Cytoplasmic portion of the chain corresponds to 403–414; it reads LSKKYKQLPHML. The helical transmembrane segment at 415 to 435 threads the bilayer; it reads TTNLLIAQSIVCAGMMIWNFV. The Lumenal portion of the chain corresponds to 436 to 438; the sequence is KEK. Residues 439–459 form a helical membrane-spanning segment; it reads NFVGQILVFVLLYSSLYSTYL. Topologically, residues 460 to 480 are cytoplasmic; sequence WTGLLAISLFLLKKRERVQIP. Residues 481–501 form a helical membrane-spanning segment; the sequence is VGIIIISGWGIPALLVGVLLI. The Lumenal segment spans residues 502–520; sequence TGKHNGDSIDSAFFYGKEQ. Residues 521 to 541 traverse the membrane as a helical segment; sequence MITTAVTLFCSILIAGISLMC. Topologically, residues 542–660 are cytoplasmic; the sequence is MNQTAQAGSY…GDQQLTRHVL (119 aa). Residue arginine 657 participates in cholesterol binding. A helical membrane pass occupies residues 661 to 681; that stretch reads LCLLLIIGLFANLSSCLWWLF. At 682–691 the chain is on the lumenal side; the sequence is NQEPGRLYVE. The chain crosses the membrane as a helical span at residues 692-712; it reads LQFFCAVFNFGQGFISFGIFG. Over 713–870 the chain is Cytoplasmic; it reads LDKHLIILPF…SSPPSHSPKT (158 aa). The 79-residue stretch at 757-835 folds into the DEP domain; sequence YHRDLCIRNI…DEYLFYRFLQ (79 aa).

As to quaternary structure, homodimer; via the transporter region and DEP domain. Interacts with the GATOR1 complex and prevents interaction between GATOR1 and KICSTOR; this interaction is disrupted upon cholesterol starvation.

The protein localises to the lysosome membrane. Functionally, cholesterol-binding protein that acts as a regulator of mTORC1 signaling pathway. Acts as a sensor of cholesterol to signal cholesterol sufficiency to mTORC1: in presence of cholesterol, binds cholesterol, leading to disruption of the interaction between the GATOR1 and KICSTOR complexes and promotion of mTORC1 signaling. Upon cholesterol starvation, GPR155/LYCHOS is unable to perturb the association between GATOR1 and KICSTOR, leading to mTORC1 signaling inhibition. Binds indole-3-acetic acid and may play a role in tryptophan metabolism. In Homo sapiens (Human), this protein is Lysosomal cholesterol signaling protein.